The following is a 271-amino-acid chain: MSPPLEPHDYIGLSAAAASPTPSSSSCSSSPNPGGEARGPRLTLRLGLPGSESPEREVVAAGLTLGPLPPTTTKAASKRAFPDSSPRHGASSGSVAAAAACQDKAAPAAAPPAAKAQVVGWPPVRNYRKNTLAASASKGKGEDKGTAEGGPLYVKVSMDGAPYLRKVDLKMYSSYEDLSMALEKMFSCFITGQSGLRKSSNRDRLTNGSKADALQDQEYVLTYEDKDADWMLVGDLPWDLFTTICRKLKIMRGSDAAGIAPRSIEQSGQSR.

The segment at 1–96 (MSPPLEPHDY…RHGASSGSVA (96 aa)) is disordered. Low complexity-rich tracts occupy residues 14 to 33 (SAAA…SPNP) and 40 to 50 (PRLTLRLGLPG). An EAR-like (transcriptional repression) motif is present at residues 44–48 (LRLGL). One can recognise a PB1 domain in the interval 151-255 (PLYVKVSMDG…RKLKIMRGSD (105 aa)).

This sequence belongs to the Aux/IAA family. Homodimers and heterodimers.

It localises to the nucleus. Aux/IAA proteins are short-lived transcriptional factors that function as repressors of early auxin response genes at low auxin concentrations. The chain is Auxin-responsive protein IAA5 (IAA5) from Oryza sativa subsp. japonica (Rice).